A 248-amino-acid polypeptide reads, in one-letter code: Tryptophan synthase alpha chain (248 aa).

Residues Glu-36 and Asp-47 each act as proton acceptor in the active site.

The protein belongs to the TrpA family. Tetramer of two alpha and two beta chains.

The catalysed reaction is (1S,2R)-1-C-(indol-3-yl)glycerol 3-phosphate + L-serine = D-glyceraldehyde 3-phosphate + L-tryptophan + H2O. It participates in amino-acid biosynthesis; L-tryptophan biosynthesis; L-tryptophan from chorismate: step 5/5. Its function is as follows. The alpha subunit is responsible for the aldol cleavage of indoleglycerol phosphate to indole and glyceraldehyde 3-phosphate. The chain is Tryptophan synthase alpha chain from Archaeoglobus fulgidus (strain ATCC 49558 / DSM 4304 / JCM 9628 / NBRC 100126 / VC-16).